Consider the following 106-residue polypeptide: Small ribosomal subunit protein uS10 (106 aa).

This sequence belongs to the universal ribosomal protein uS10 family. As to quaternary structure, part of the 30S ribosomal subunit.

Involved in the binding of tRNA to the ribosomes. The chain is Small ribosomal subunit protein uS10 from Prochlorococcus marinus subsp. pastoris (strain CCMP1986 / NIES-2087 / MED4).